A 650-amino-acid chain; its full sequence is Acetyl-coenzyme A synthetase (650 aa).

Residues Arg-191–Arg-194, Thr-311, and Asn-335 contribute to the CoA site. ATP-binding positions include Gly-387–Pro-389, Asp-411–Thr-416, Asp-500, and Arg-515. Ser-523 contributes to the CoA binding site. Arg-526 contributes to the ATP binding site. 3 residues coordinate Mg(2+): Val-537, His-539, and Val-542. A CoA-binding site is contributed by Arg-584. Lys-609 bears the N6-acetyllysine mark.

Belongs to the ATP-dependent AMP-binding enzyme family. The cofactor is Mg(2+). In terms of processing, acetylated. Deacetylation by the SIR2-homolog deacetylase activates the enzyme.

The enzyme catalyses acetate + ATP + CoA = acetyl-CoA + AMP + diphosphate. Functionally, catalyzes the conversion of acetate into acetyl-CoA (AcCoA), an essential intermediate at the junction of anabolic and catabolic pathways. AcsA undergoes a two-step reaction. In the first half reaction, AcsA combines acetate with ATP to form acetyl-adenylate (AcAMP) intermediate. In the second half reaction, it can then transfer the acetyl group from AcAMP to the sulfhydryl group of CoA, forming the product AcCoA. The sequence is that of Acetyl-coenzyme A synthetase from Shewanella sediminis (strain HAW-EB3).